The primary structure comprises 326 residues: Protein FAM110C (326 aa).

Disordered stretches follow at residues 1–37 (MRAL…KSAV), 51–80 (TLGS…PSTL), and 201–221 (VELR…LSSR). The span at 209–221 (KGLQRSQSDLSSR) shows a compositional bias: polar residues. Phosphoserine is present on Ser255.

Belongs to the FAM110 family. In terms of assembly, interacts with AKT1; the interaction is transient and follows AKT1 activation. Interacts with PPP2CA and alpha-tubulin.

It localises to the cytoplasm. The protein resides in the cytoskeleton. It is found in the microtubule organizing center. Its subcellular location is the centrosome. The protein localises to the spindle pole. It localises to the nucleus. May play a role in microtubule organization. May play a role in cell spreading and cell migration of epithelial cells; the function may involve the AKT1 signaling pathway. This Rattus norvegicus (Rat) protein is Protein FAM110C (Fam110c).